Here is a 69-residue protein sequence, read N- to C-terminus: Ribosome modulation factor (69 aa).

The protein belongs to the ribosome modulation factor family.

It is found in the cytoplasm. In terms of biological role, during stationary phase, converts 70S ribosomes to an inactive dimeric form (100S ribosomes). The chain is Ribosome modulation factor from Hahella chejuensis (strain KCTC 2396).